Consider the following 331-residue polypeptide: RNA/RNP complex-1-interacting phosphatase (331 aa).

The region spanning 61–208 is the Tyrosine-protein phosphatase domain; the sequence is FEKHLAPEEC…LRNGPIRKNW (148 aa). C152 acts as the Phosphocysteine intermediate in catalysis. A substrate-binding site is contributed by 153–158; the sequence is THGVNR. The Proton donor/acceptor role is filled by R158.

It belongs to the protein-tyrosine phosphatase family. Non-receptor class dual specificity subfamily. As to quaternary structure, monomer. May interact with SFRS7 and SFRS9/SRP30C.

The protein resides in the nucleus. The protein localises to the nucleus speckle. Functionally, possesses RNA 5'-triphosphatase and diphosphatase activities, but displays a poor protein-tyrosine phosphatase activity. In addition, has phosphatase activity with ATP, ADP and O-methylfluorescein phosphate (in vitro). Binds to RNA. May participate in nuclear mRNA metabolism. This Bos taurus (Bovine) protein is RNA/RNP complex-1-interacting phosphatase (DUSP11).